We begin with the raw amino-acid sequence, 277 residues long: Ribosomal RNA small subunit methyltransferase A (277 aa).

S-adenosyl-L-methionine is bound by residues asparagine 27, leucine 29, glycine 54, glutamate 75, aspartate 95, and asparagine 118.

It belongs to the class I-like SAM-binding methyltransferase superfamily. rRNA adenine N(6)-methyltransferase family. RsmA subfamily.

It localises to the cytoplasm. The catalysed reaction is adenosine(1518)/adenosine(1519) in 16S rRNA + 4 S-adenosyl-L-methionine = N(6)-dimethyladenosine(1518)/N(6)-dimethyladenosine(1519) in 16S rRNA + 4 S-adenosyl-L-homocysteine + 4 H(+). Specifically dimethylates two adjacent adenosines (A1518 and A1519) in the loop of a conserved hairpin near the 3'-end of 16S rRNA in the 30S particle. May play a critical role in biogenesis of 30S subunits. In Chlamydia trachomatis serovar L2 (strain ATCC VR-902B / DSM 19102 / 434/Bu), this protein is Ribosomal RNA small subunit methyltransferase A.